The chain runs to 855 residues: Sucrose synthase 5 (855 aa).

A GT-B glycosyltransferase region spans residues 279–758 (SIFNIVIFSI…GLQRICECYT (480 aa)).

The protein belongs to the glycosyltransferase 1 family. Plant sucrose synthase subfamily. In terms of tissue distribution, predominantly expressed in roots, flowers and immature seeds.

Its subcellular location is the cytoplasm. The protein localises to the membrane. It catalyses the reaction an NDP-alpha-D-glucose + D-fructose = a ribonucleoside 5'-diphosphate + sucrose + H(+). Its function is as follows. Sucrose-cleaving enzyme that provides UDP-glucose and fructose for various metabolic pathways. In Oryza sativa subsp. japonica (Rice), this protein is Sucrose synthase 5 (SUS5).